We begin with the raw amino-acid sequence, 365 residues long: DNA polymerase IV (365 aa).

A UmuC domain is found at 14 to 198 (IIHIDMDAFF…LPIEKFHGVG (185 aa)). Residues aspartate 18 and aspartate 116 each contribute to the Mg(2+) site. The active site involves glutamate 117.

Belongs to the DNA polymerase type-Y family. In terms of assembly, monomer. Mg(2+) is required as a cofactor.

It localises to the cytoplasm. It carries out the reaction DNA(n) + a 2'-deoxyribonucleoside 5'-triphosphate = DNA(n+1) + diphosphate. Its function is as follows. Poorly processive, error-prone DNA polymerase involved in untargeted mutagenesis. Copies undamaged DNA at stalled replication forks, which arise in vivo from mismatched or misaligned primer ends. These misaligned primers can be extended by PolIV. Exhibits no 3'-5' exonuclease (proofreading) activity. May be involved in translesional synthesis, in conjunction with the beta clamp from PolIII. This Streptococcus pyogenes serotype M3 (strain ATCC BAA-595 / MGAS315) protein is DNA polymerase IV.